A 576-amino-acid chain; its full sequence is CDPK-related kinase 1 (576 aa).

The interval M1 to P39 is disordered. G2 carries the N-myristoyl glycine lipid modification. Over residues E10 to A33 the composition is skewed to polar residues. Positions Y123–L385 constitute a Protein kinase domain. Residues V129–T137 and K155 contribute to the ATP site. D251 serves as the catalytic Proton acceptor. S291 carries the phosphoserine modification. Position 333 is a phosphoserine; by CPK1 and CPK34 (S333). Positions E390–L420 are autoinhibitory domain. The interval S409–L429 is calmodulin binding (CaMBD). EF-hand domains are found at residues P427 to A463, M464 to L499, E500 to V539, and H542 to R571. Ca(2+) contacts are provided by S442, N444, Y446, K483, E488, D519, N521, E528, D553, and K555. A Phosphoserine modification is found at S557.

Belongs to the protein kinase superfamily. Ser/Thr protein kinase family. CDPK subfamily. Binds calmodulin (CaM) in a calcium-dependent manner. Interacts with HSFA1A. Post-translationally, autophosphorylated.

Its subcellular location is the membrane. It catalyses the reaction L-seryl-[protein] + ATP = O-phospho-L-seryl-[protein] + ADP + H(+). The catalysed reaction is L-threonyl-[protein] + ATP = O-phospho-L-threonyl-[protein] + ADP + H(+). Its activity is regulated as follows. Activated by calcium and calmodulin. Autophosphorylation may play an important role in the regulation of the kinase activity. In terms of biological role, may play a role in signal transduction pathways that involve calcium as a second messenger. Serine/threonine kinase that phosphorylates histone H3. Confers thermotolerance; involved in the heat-shock-mediated calmodulin-dependent signal transduction leading to the activation of heat-shock transcription factors (HSFs); phosphorylates HSFA1A. The sequence is that of CDPK-related kinase 1 (CRK1) from Arabidopsis thaliana (Mouse-ear cress).